Here is a 191-residue protein sequence, read N- to C-terminus: Protein GrpE (191 aa).

Residues 1–14 (MEDQKQTPSNQTAT) are compositionally biased toward polar residues. The disordered stretch occupies residues 1–35 (MEDQKQTPSNQTATPAGDEATSTAAASPETGAPDT). Positions 19–35 (EATSTAAASPETGAPDT) are enriched in low complexity.

It belongs to the GrpE family. As to quaternary structure, homodimer.

It is found in the cytoplasm. Participates actively in the response to hyperosmotic and heat shock by preventing the aggregation of stress-denatured proteins, in association with DnaK and GrpE. It is the nucleotide exchange factor for DnaK and may function as a thermosensor. Unfolded proteins bind initially to DnaJ; upon interaction with the DnaJ-bound protein, DnaK hydrolyzes its bound ATP, resulting in the formation of a stable complex. GrpE releases ADP from DnaK; ATP binding to DnaK triggers the release of the substrate protein, thus completing the reaction cycle. Several rounds of ATP-dependent interactions between DnaJ, DnaK and GrpE are required for fully efficient folding. The protein is Protein GrpE of Cupriavidus taiwanensis (strain DSM 17343 / BCRC 17206 / CCUG 44338 / CIP 107171 / LMG 19424 / R1) (Ralstonia taiwanensis (strain LMG 19424)).